The primary structure comprises 610 residues: Elongation factor 4 (610 aa).

One can recognise a tr-type G domain in the interval 13 to 195 (SHIRNFSIVA…AIVNRLPAPK (183 aa)). Residues 25-30 (DHGKST) and 142-145 (NKID) contribute to the GTP site.

It belongs to the TRAFAC class translation factor GTPase superfamily. Classic translation factor GTPase family. LepA subfamily.

The protein resides in the cell inner membrane. It catalyses the reaction GTP + H2O = GDP + phosphate + H(+). In terms of biological role, required for accurate and efficient protein synthesis under certain stress conditions. May act as a fidelity factor of the translation reaction, by catalyzing a one-codon backward translocation of tRNAs on improperly translocated ribosomes. Back-translocation proceeds from a post-translocation (POST) complex to a pre-translocation (PRE) complex, thus giving elongation factor G a second chance to translocate the tRNAs correctly. Binds to ribosomes in a GTP-dependent manner. The polypeptide is Elongation factor 4 (Rhizobium leguminosarum bv. trifolii (strain WSM2304)).